A 454-amino-acid chain; its full sequence is tRNA(Ile)-lysidine synthase (454 aa).

31-36 (SGGADS) is a binding site for ATP.

It belongs to the tRNA(Ile)-lysidine synthase family.

Its subcellular location is the cytoplasm. The catalysed reaction is cytidine(34) in tRNA(Ile2) + L-lysine + ATP = lysidine(34) in tRNA(Ile2) + AMP + diphosphate + H(+). Ligates lysine onto the cytidine present at position 34 of the AUA codon-specific tRNA(Ile) that contains the anticodon CAU, in an ATP-dependent manner. Cytidine is converted to lysidine, thus changing the amino acid specificity of the tRNA from methionine to isoleucine. The polypeptide is tRNA(Ile)-lysidine synthase (Porphyromonas gingivalis (strain ATCC BAA-308 / W83)).